Reading from the N-terminus, the 182-residue chain is ATP synthase subunit delta (182 aa).

This sequence belongs to the ATPase delta chain family. As to quaternary structure, F-type ATPases have 2 components, F(1) - the catalytic core - and F(0) - the membrane proton channel. F(1) has five subunits: alpha(3), beta(3), gamma(1), delta(1), epsilon(1). F(0) has three main subunits: a(1), b(2) and c(10-14). The alpha and beta chains form an alternating ring which encloses part of the gamma chain. F(1) is attached to F(0) by a central stalk formed by the gamma and epsilon chains, while a peripheral stalk is formed by the delta and b chains.

Its subcellular location is the cell inner membrane. Functionally, f(1)F(0) ATP synthase produces ATP from ADP in the presence of a proton or sodium gradient. F-type ATPases consist of two structural domains, F(1) containing the extramembraneous catalytic core and F(0) containing the membrane proton channel, linked together by a central stalk and a peripheral stalk. During catalysis, ATP synthesis in the catalytic domain of F(1) is coupled via a rotary mechanism of the central stalk subunits to proton translocation. In terms of biological role, this protein is part of the stalk that links CF(0) to CF(1). It either transmits conformational changes from CF(0) to CF(1) or is implicated in proton conduction. The polypeptide is ATP synthase subunit delta (Histophilus somni (strain 2336) (Haemophilus somnus)).